We begin with the raw amino-acid sequence, 465 residues long: Kynureninase (465 aa).

Residues Leu-116, Thr-117, 144–147, Asp-231, His-234, and Tyr-256 contribute to the pyridoxal 5'-phosphate site; that span reads FPSD. The residue at position 257 (Lys-257) is an N6-(pyridoxal phosphate)lysine. Residues Trp-291 and Asn-319 each contribute to the pyridoxal 5'-phosphate site.

This sequence belongs to the kynureninase family. In terms of assembly, homodimer. Pyridoxal 5'-phosphate is required as a cofactor.

Its subcellular location is the cytoplasm. The catalysed reaction is L-kynurenine + H2O = anthranilate + L-alanine + H(+). The enzyme catalyses 3-hydroxy-L-kynurenine + H2O = 3-hydroxyanthranilate + L-alanine + H(+). It functions in the pathway amino-acid degradation; L-kynurenine degradation; L-alanine and anthranilate from L-kynurenine: step 1/1. The protein operates within cofactor biosynthesis; NAD(+) biosynthesis; quinolinate from L-kynurenine: step 2/3. Its function is as follows. Catalyzes the cleavage of L-kynurenine (L-Kyn) and L-3-hydroxykynurenine (L-3OHKyn) into anthranilic acid (AA) and 3-hydroxyanthranilic acid (3-OHAA), respectively. The sequence is that of Kynureninase from Scheffersomyces stipitis (strain ATCC 58785 / CBS 6054 / NBRC 10063 / NRRL Y-11545) (Yeast).